A 107-amino-acid polypeptide reads, in one-letter code: Thioredoxin (107 aa).

Residues 2 to 107 (SVEAVVKQVD…GIRELIQANA (106 aa)) form the Thioredoxin domain. Catalysis depends on nucleophile residues Cys34 and Cys37. The cysteines at positions 34 and 37 are disulfide-linked.

This sequence belongs to the thioredoxin family.

Functionally, participates in various redox reactions through the reversible oxidation of its active center dithiol to a disulfide and catalyzes dithiol-disulfide exchange reactions. In Echinococcus granulosus (Hydatid tapeworm), this protein is Thioredoxin (TRX).